A 67-amino-acid chain; its full sequence is V-type proton ATPase subunit e (67 aa).

Residues 1–2 lie on the Lumenal side of the membrane; the sequence is MG. The chain crosses the membrane as a helical span at residues 3-23; the sequence is GLVVLLVGLLTALMSVVSYYV. The Cytoplasmic portion of the chain corresponds to 24-35; it reads SPKGNNTSTWQM. Residues 36–56 traverse the membrane as a helical segment; it reads SLILTFSCCYLLWAITYLAQL. The Lumenal segment spans residues 57 to 67; sequence HPLEAPSRVLE.

It belongs to the V-ATPase e1/e2 subunit family. In terms of assembly, V-ATPase is a heteromultimeric enzyme composed of a peripheral catalytic V1 complex (components A to H) attached to an integral membrane V0 proton pore complex (components: a, c, c', c'', d, e, f and VOA1).

The protein localises to the vacuole membrane. Functionally, subunit of the V0 complex of vacuolar(H+)-ATPase (V-ATPase), a multisubunit enzyme composed of a peripheral complex (V1) that hydrolyzes ATP and a membrane integral complex (V0) that translocates protons. V-ATPase is responsible for acidifying and maintaining the pH of intracellular compartments. The chain is V-type proton ATPase subunit e (vma9) from Schizosaccharomyces pombe (strain 972 / ATCC 24843) (Fission yeast).